The following is a 278-amino-acid chain: Formamidopyrimidine-DNA glycosylase (278 aa).

The Schiff-base intermediate with DNA role is filled by Pro2. The Proton donor role is filled by Glu3. Lys59 functions as the Proton donor; for beta-elimination activity in the catalytic mechanism. DNA-binding residues include His93, Arg112, and Arg153. The segment at 238–272 (NVYDRAGEPCPRCQSTIERIVVAQRSTYFCPTCQI) adopts an FPG-type zinc-finger fold. Arg262 serves as the catalytic Proton donor; for delta-elimination activity.

This sequence belongs to the FPG family. In terms of assembly, monomer. Zn(2+) is required as a cofactor.

It carries out the reaction Hydrolysis of DNA containing ring-opened 7-methylguanine residues, releasing 2,6-diamino-4-hydroxy-5-(N-methyl)formamidopyrimidine.. It catalyses the reaction 2'-deoxyribonucleotide-(2'-deoxyribose 5'-phosphate)-2'-deoxyribonucleotide-DNA = a 3'-end 2'-deoxyribonucleotide-(2,3-dehydro-2,3-deoxyribose 5'-phosphate)-DNA + a 5'-end 5'-phospho-2'-deoxyribonucleoside-DNA + H(+). In terms of biological role, involved in base excision repair of DNA damaged by oxidation or by mutagenic agents. Acts as a DNA glycosylase that recognizes and removes damaged bases. Has a preference for oxidized purines, such as 7,8-dihydro-8-oxoguanine (8-oxoG). Has AP (apurinic/apyrimidinic) lyase activity and introduces nicks in the DNA strand. Cleaves the DNA backbone by beta-delta elimination to generate a single-strand break at the site of the removed base with both 3'- and 5'-phosphates. The sequence is that of Formamidopyrimidine-DNA glycosylase from Chloroflexus aurantiacus (strain ATCC 29366 / DSM 635 / J-10-fl).